The following is an 82-amino-acid chain: Antitoxin MazE2 (82 aa).

Probably forms a complex with cognate toxin MazF2.

Its function is as follows. Antitoxin component of a type II toxin-antitoxin (TA) system. Labile antitoxin that binds to cognate MazF2 toxin and counteracts its endoribonuclease activity. The chain is Antitoxin MazE2 (mazE2) from Mycobacterium bovis (strain ATCC BAA-935 / AF2122/97).